The sequence spans 160 residues: 2-C-methyl-D-erythritol 2,4-cyclodiphosphate synthase (160 aa).

A divalent metal cation contacts are provided by Asp11 and His13. Residues 11-13 (DVH) and 37-38 (HS) each bind 4-CDP-2-C-methyl-D-erythritol 2-phosphate. Residue His45 coordinates a divalent metal cation. Residues 59-61 (DIG) and Arg145 each bind 4-CDP-2-C-methyl-D-erythritol 2-phosphate.

Belongs to the IspF family. In terms of assembly, homotrimer. A divalent metal cation is required as a cofactor.

It catalyses the reaction 4-CDP-2-C-methyl-D-erythritol 2-phosphate = 2-C-methyl-D-erythritol 2,4-cyclic diphosphate + CMP. It participates in isoprenoid biosynthesis; isopentenyl diphosphate biosynthesis via DXP pathway; isopentenyl diphosphate from 1-deoxy-D-xylulose 5-phosphate: step 4/6. In terms of biological role, involved in the biosynthesis of isopentenyl diphosphate (IPP) and dimethylallyl diphosphate (DMAPP), two major building blocks of isoprenoid compounds. Catalyzes the conversion of 4-diphosphocytidyl-2-C-methyl-D-erythritol 2-phosphate (CDP-ME2P) to 2-C-methyl-D-erythritol 2,4-cyclodiphosphate (ME-CPP) with a corresponding release of cytidine 5-monophosphate (CMP). This chain is 2-C-methyl-D-erythritol 2,4-cyclodiphosphate synthase, found in Neisseria gonorrhoeae (strain ATCC 700825 / FA 1090).